Consider the following 124-residue polypeptide: Histone H2B, embryonic (124 aa).

The disordered stretch occupies residues 1–31 (MAPTAQVAKKGSKKAVKGTKTAXGGKKRNRK). O-linked (GlcNAc) serine glycosylation occurs at Ser111. Lys119 participates in a covalent cross-link: Glycyl lysine isopeptide (Lys-Gly) (interchain with G-Cter in ubiquitin).

Belongs to the histone H2B family. The nucleosome is a histone octamer containing two molecules each of H2A, H2B, H3 and H4 assembled in one H3-H4 heterotetramer and two H2A-H2B heterodimers. The octamer wraps approximately 147 bp of DNA. Post-translationally, monoubiquitination of Lys-119 gives a specific tag for epigenetic transcriptional activation and is also prerequisite for histone H3 'Lys-4' and 'Lys-79' methylation. GlcNAcylation at Ser-111 promotes monoubiquitination of Lys-119. It fluctuates in response to extracellular glucose, and associates with transcribed genes.

The protein resides in the nucleus. Its subcellular location is the chromosome. In terms of biological role, core component of nucleosome. Nucleosomes wrap and compact DNA into chromatin, limiting DNA accessibility to the cellular machineries which require DNA as a template. Histones thereby play a central role in transcription regulation, DNA repair, DNA replication and chromosomal stability. DNA accessibility is regulated via a complex set of post-translational modifications of histones, also called histone code, and nucleosome remodeling. This Strongylocentrotus purpuratus (Purple sea urchin) protein is Histone H2B, embryonic.